A 1122-amino-acid chain; its full sequence is MMVKVTKLVASRPIVVFCVLAFLVVVFECIWISNWRTTTENLVKEVASFTEDLRTSLVSEIENIGKFTYAKTNLSTIGLARVIDSYITNNDTGFTEIQTQIAPLLFVAYSTILQVSQVSYISRDGLMFSYIAESNTSVAVFANSSSNSSRGDYTWYTQTVDQLTGRLNGNSTKSQSLDVTHTDWFQAAQSNNYTTAFVGTSLGGEDNETLIQSVVSLYSKKGLVSLGFPVKTLTEVLNSLNLHGEELYMWTKDGTVLVREGSLNDSFFISNGSICFGRESNSLWSQCIPENCSSSGYEVEIKRLRYQAFCSVIEVSGVPLRYTLMFPNKGGATRIKHQAEKAKYQLIVVMIFLGFGWPVWFVWFMMQATRREMHMRATLINQMEATQQAERKSMNKSQAFANASHDIRGALAGMKGLIDICRDGVKPGSDVDTTLNQVNVCAKDLVALLNSVLDMSKIESGKMQLVEEDFNLSKLLEDVIDFYHPVAMKKGVDVVLDPHDGSVFKFSNVRGDSGRLKQILNNLVSNAVKFTVDGHIAVRAWAQRPGSNSSVVLASYPKGVSKFVKSMFCKNKEESSTYETEISNSIRNNANTMEFVFEVDDTGKGIPMEMRKSVFENYVQVRETAQGHQGTGLGLGIVQSLVRLMGGEIRITDKAMGEKGTCFQFNVLLTTLESPPVSDMKVRQEIEAGGDYVSTPNLGLTINTSLGGSMNIRNLSPRFNNCLSSSPKQEGSRVVLLLKNEERRRVTEKYIKNLGIKVTVVEKWEHLSYALERLFGFSPQSSMGRAECSLSCPSSRELPFIGMDGIDSRSQLPKRRSISFSAVVLLVIDAKTGPFFELCDIVKQFRRGLPHGISCKVVWLNESSTRVSERGDISCSRPLHGSRLMEVLKMLPEFGGTVLKEPPTELQRESLLRHSFVAERSPKHKVQEEGPSSMFNKKLGKRIMASTDSESETRVKSVRTGRKPIGNPEDEQETSKPSDDEFLRGKRVLVVDDNFISRKVATGKLKKMGVSEVEQCDSGKEALRLVTEGLTQREEQGSVDKLPFDYIFMDCQMPEMDGYEATREIRKVEKSYGVRTPIIAVSGHDPGSEEARETIQAGMDAFLDKSLNQLANVIREIESKRH.

The Cytoplasmic segment spans residues 1-12; the sequence is MMVKVTKLVASR. Residues 13–33 traverse the membrane as a helical segment; sequence PIVVFCVLAFLVVVFECIWIS. Residues 34 to 345 lie on the Extracellular side of the membrane; the sequence is NWRTTTENLV…KHQAEKAKYQ (312 aa). Residues 346–366 form a helical membrane-spanning segment; the sequence is LIVVMIFLGFGWPVWFVWFMM. The Cytoplasmic segment spans residues 367–1122; that stretch reads QATRREMHMR…VIREIESKRH (756 aa). Residues 402–671 form the Histidine kinase domain; sequence NASHDIRGAL…CFQFNVLLTT (270 aa). His-405 is modified (phosphohistidine; by autocatalysis). Positions 918-928 are enriched in basic and acidic residues; sequence AERSPKHKVQE. The segment at 918 to 981 is disordered; it reads AERSPKHKVQ…QETSKPSDDE (64 aa). Residues 987–1120 form the Response regulatory domain; sequence RVLVVDDNFI…ANVIREIESK (134 aa). The residue at position 1050 (Asp-1050) is a 4-aspartylphosphate.

As to quaternary structure, homodimer. Interacts with AHP2 and AHP3. As to expression, expressed in vascular tissues of inflorescence stems and floral organs, especially in procambium cells, and in siliques.

Its subcellular location is the cell membrane. It catalyses the reaction ATP + protein L-histidine = ADP + protein N-phospho-L-histidine.. Functionally, essential protein. Functions as a histidine kinase and transmits the stress signal to a downstream MAPK cascade. This protein undergoes an ATP-dependent autophosphorylation at a conserved histidine residue in the kinase core, and a phosphoryl group is then transferred to a conserved aspartate residue in the receiver domain. Required for the development of megagametophyte in female gametophyte (embryo sac) independently of cytokinin. Contributes to vascular bundle formation and secondary growth in a cytokinin-independent manner, probably by promoting the maintenance of mitotic activity and/or identity of procambial cells. Seems to influence and promote the cytokinin signaling pathway. This is Histidine kinase CKI1 (CKI1) from Arabidopsis thaliana (Mouse-ear cress).